A 143-amino-acid polypeptide reads, in one-letter code: MAKKVTAYVKLQVAAGKANPSPPVGPALGQHGVNIMEFCKAFNAQTQGMEVGAPVPVIISVYSDRSFTFVMKTPPASFLLKKAAGITSGSGRPNTNKVGKVNRAQLEAIATTKLPDLTAADMDAAVRTIAGSARSMGLDVEGV.

The protein belongs to the universal ribosomal protein uL11 family. As to quaternary structure, part of the ribosomal stalk of the 50S ribosomal subunit. Interacts with L10 and the large rRNA to form the base of the stalk. L10 forms an elongated spine to which L12 dimers bind in a sequential fashion forming a multimeric L10(L12)X complex. One or more lysine residues are methylated.

In terms of biological role, forms part of the ribosomal stalk which helps the ribosome interact with GTP-bound translation factors. The sequence is that of Large ribosomal subunit protein uL11 from Cellvibrio japonicus (strain Ueda107) (Pseudomonas fluorescens subsp. cellulosa).